A 434-amino-acid chain; its full sequence is Progestin and adipoQ receptor-like protein 1 (434 aa).

At 1–201 (MNPDEVNRAL…KSIWSLHTET (201 aa)) the chain is on the cytoplasmic side. Disordered regions lie at residues 74 to 103 (LPQQEGHRSRATSFAGRIRAGSDDEAMPKH) and 118 to 137 (EINLQGTPDKRKDDEDELEV). The helical transmembrane segment at 202 to 222 (GNIWTHLIGCVAFFFLACWFL) threads the bilayer. At 223–234 (TRPDNHIQFQEK) the chain is on the extracellular side. The chain crosses the membrane as a helical span at residues 235-255 (VVFSFFFAGAVLCLGLSFAFH). The Cytoplasmic segment spans residues 256–273 (TLSCHSVNVVKIFCKLDY). Residues 274–294 (MGISLLIIGSFIPWIYYGFYC) form a helical membrane-spanning segment. The Extracellular portion of the chain corresponds to 295–299 (RREPK). A helical transmembrane segment spans residues 300 to 320 (ITYIAMVSVLGIGAIVVSLWD). Residues 321–331 (KFSESRFRPIR) lie on the Cytoplasmic side of the membrane. The helical transmembrane segment at 332–352 (AAVFVGMGCSGVIPTIHYIIT) threads the bilayer. The Extracellular portion of the chain corresponds to 353–362 (DGVHSLFADN). Residues 363 to 383 (SFHWLLLMAFLYLLGAGLYAT) traverse the membrane as a helical segment. At 384 to 403 (RTPERFFPGKCDIWFQSHQL) the chain is on the cytoplasmic side. Residues 404–424 (FHTCVVIAAFVHYYGISEMAF) traverse the membrane as a helical segment. Over 425 to 434 (ARLNEQCPVR) the chain is Extracellular.

The protein belongs to the ADIPOR family.

It localises to the membrane. Its function is as follows. Probable receptor, which may be involved in metabolic pathways that regulate lipid metabolism such as fatty acid oxidation. This chain is Progestin and adipoQ receptor-like protein 1 (paqr-1), found in Caenorhabditis elegans.